A 458-amino-acid chain; its full sequence is MALWGGRFKQEADAKFKFFNDSLRFDYRLALQDIDGSIGWAKAITSVGILTEQEHQQLVVALKELRAEIEPNIAIILRDDAEDIHSWVESKLIEKVGDLGKKLHTGRSRNDQVAVDMKMWCKVQAVVLQERIRNLQHKLVETAEANQNAVMPGYTHLQRAQPITFAHWCMAYYEMLERDFSRLSDAYKRMHTCPLGSGALAGTAYSIDRDALAQDLGFSIGTRNSLDSVSDRDHVLELLSTASISMVHLSRFAEDLIFFNSGESAFLELSDRVTSGSSLMPQKKNPDACELIRGKSGRVFGALSGLLTTLKGLPLAYNKDMQEDKEGIFDAMETWQACLEIGALVLEDINVNVERTREAAQQGYSNATELADYLVAKGIPFREAHHIVGEAVVYAISKREPLEALSVAEFKQFHPVIDEDVYPILSLESCLEKRSAKGGVNPERVREAIEAAKVNLGA.

The protein belongs to the lyase 1 family. Argininosuccinate lyase subfamily.

Its subcellular location is the cytoplasm. It carries out the reaction 2-(N(omega)-L-arginino)succinate = fumarate + L-arginine. It participates in amino-acid biosynthesis; L-arginine biosynthesis; L-arginine from L-ornithine and carbamoyl phosphate: step 3/3. The protein is Argininosuccinate lyase of Actinobacillus pleuropneumoniae serotype 7 (strain AP76).